The primary structure comprises 121 residues: MARIAGVDIPREKRIVISLTYVYGIGTSTAKKIVEEANVSADTRVKDLTDDELGRIREVVDSYKVEGDLRREQNLNIKRLMEISSYRGIRHRRGLPVRGQKTKNNARTRKGPVKTVANKKK.

The disordered stretch occupies residues 91-121 (HRRGLPVRGQKTKNNARTRKGPVKTVANKKK).

This sequence belongs to the universal ribosomal protein uS13 family. As to quaternary structure, part of the 30S ribosomal subunit. Forms a loose heterodimer with protein S19. Forms two bridges to the 50S subunit in the 70S ribosome.

Located at the top of the head of the 30S subunit, it contacts several helices of the 16S rRNA. In the 70S ribosome it contacts the 23S rRNA (bridge B1a) and protein L5 of the 50S subunit (bridge B1b), connecting the 2 subunits; these bridges are implicated in subunit movement. Contacts the tRNAs in the A and P-sites. This is Small ribosomal subunit protein uS13 from Staphylococcus haemolyticus (strain JCSC1435).